Consider the following 118-residue polypeptide: NADH-ubiquinone oxidoreductase chain 3 (118 aa).

A run of 2 helical transmembrane segments spans residues 7–27 (ICIYLVISPLVSLIPLGLPFL) and 87–107 (IDPFGSWSMMAFLLILTIGSL).

The protein belongs to the complex I subunit 3 family.

It is found in the mitochondrion membrane. It catalyses the reaction a ubiquinone + NADH + 5 H(+)(in) = a ubiquinol + NAD(+) + 4 H(+)(out). Core subunit of the mitochondrial membrane respiratory chain NADH dehydrogenase (Complex I) that is believed to belong to the minimal assembly required for catalysis. Complex I functions in the transfer of electrons from NADH to the respiratory chain. The immediate electron acceptor for the enzyme is believed to be ubiquinone. This chain is NADH-ubiquinone oxidoreductase chain 3 (ND3), found in Solanum tuberosum (Potato).